Consider the following 148-residue polypeptide: Azurin (148 aa).

A signal peptide spans 1–20; sequence MLRKLAAVSLLSLLSAPLLA. Positions 21 to 148 constitute a Plastocyanin-like domain; sequence AECSVDIQGN…ALMKGTLTLK (128 aa). Residues Cys23 and Cys46 are joined by a disulfide bond. Residues His66, Cys132, His137, and Met141 each coordinate Cu cation.

It localises to the periplasm. Transfers electrons from cytochrome c551 to cytochrome oxidase. This chain is Azurin (azu), found in Pseudomonas aeruginosa (strain ATCC 15692 / DSM 22644 / CIP 104116 / JCM 14847 / LMG 12228 / 1C / PRS 101 / PAO1).